We begin with the raw amino-acid sequence, 494 residues long: Monocarboxylate transporter 1 (494 aa).

The Cytoplasmic portion of the chain corresponds to 1–22 (MPPAIGGPVGYTPPDGGWGWAV). A helical transmembrane segment spans residues 23-44 (VVGAFISIGFSYAFPKSITVFF). Lysine 38 is a (S)-lactate binding site. Topologically, residues 45-55 (KEIEIIFSATT) are extracellular. A helical membrane pass occupies residues 56 to 80 (SEVSWISSIMLAVMYAGGPISSILV). The Cytoplasmic segment spans residues 81-84 (NKYG). A helical membrane pass occupies residues 85–105 (SRPVMIAGGCLSGCGLIAASF). At 106–109 (CNTV) the chain is on the extracellular side. The helical transmembrane segment at 110–132 (QELYFCIGVIGGLGLAFNLNPAL) threads the bilayer. Residues 133 to 146 (TMIGKYFYKKRPLA) are Cytoplasmic-facing. Residues 147-169 (NGLAMAGSPVFLSTLAPLNQAFF) traverse the membrane as a helical segment. The Extracellular portion of the chain corresponds to 170–174 (GIFGW). The helical transmembrane segment at 175–194 (RGSFLILGGLLLNCCVAGSL) threads the bilayer. Over 195 to 254 (MRPIGPQQGKVEKLKSKESLQEAGKSDANTDLIGGSPKGEKLSVFQTVNKFLDLSLFTHR) the chain is Cytoplasmic. Phosphoserine is present on residues serine 210, serine 213, and serine 220. At threonine 224 the chain carries Phosphothreonine. Phosphoserine is present on serine 230. A helical transmembrane segment spans residues 255–281 (GFLLYLSGNVVMFFGLFTPLVFLSNYG). The Extracellular segment spans residues 282-288 (KSKHFSS). The helical transmembrane segment at 289–310 (EKSAFLLSILAFVDMVARPSMG) threads the bilayer. Aspartate 302 is a H(+) binding site. Arginine 306 serves as a coordination point for (S)-lactate. Over 311 to 321 (LAANTRWIRPR) the chain is Cytoplasmic. Residues 322-342 (VQYFFAASVVANGVCHLLAPL) form a helical membrane-spanning segment. Over 343-346 (STTY) the chain is Extracellular. The chain crosses the membrane as a helical span at residues 347-368 (VGFCIYAGVFGFAFGWLSSVLF). Residues 369–382 (ETLMDLVGPQRFSS) lie on the Cytoplasmic side of the membrane. A helical transmembrane segment spans residues 383-403 (AVGLVTIVECCPVLLGPPLLG). At 404 to 414 (RLNDMYGDYKY) the chain is on the extracellular side. Residues 415–436 (TYWACGVILIIAGLYLFIGMGI) traverse the membrane as a helical segment. Residues 437–494 (NYRLVAKEQKAEEKKRDGKEDETSTDVDEKPKKTMKETQSPAPLQNSSGDPAEEESPV) lie on the Cytoplasmic side of the membrane. Residues 446–472 (KAEEKKRDGKEDETSTDVDEKPKKTMK) are compositionally biased toward basic and acidic residues. Residues 446–494 (KAEEKKRDGKEDETSTDVDEKPKKTMKETQSPAPLQNSSGDPAEEESPV) are disordered. Position 459 is a phosphothreonine (threonine 459). Serine 460 is subject to Phosphoserine. Threonine 461 bears the Phosphothreonine mark. A compositionally biased stretch (polar residues) spans 473 to 485 (ETQSPAPLQNSSG). Residues serine 476, serine 483, serine 484, and serine 492 each carry the phosphoserine modification.

Belongs to the major facilitator superfamily. Monocarboxylate porter (TC 2.A.1.13) family. In terms of assembly, interacts with BSG. Interacts with EMB. Interaction with either BSG or EMB is required for expression at the cell membrane. In terms of tissue distribution, detected in erythrocytes (at protein level). Detected in brain, heart, kidney, lung, muscle, jejunum enterocytes and brain capillaries.

The protein resides in the cell membrane. It localises to the basolateral cell membrane. It is found in the apical cell membrane. The catalysed reaction is (S)-lactate(in) + H(+)(in) = (S)-lactate(out) + H(+)(out). The enzyme catalyses pyruvate(out) + H(+)(out) = pyruvate(in) + H(+)(in). It catalyses the reaction acetoacetate(out) + H(+)(out) = acetoacetate(in) + H(+)(in). It carries out the reaction (S)-3-hydroxybutanoate(out) + H(+)(out) = (S)-3-hydroxybutanoate(in) + H(+)(in). The catalysed reaction is (R)-3-hydroxybutanoate(out) + H(+)(out) = (R)-3-hydroxybutanoate(in) + H(+)(in). The enzyme catalyses 3-methyl-2-oxobutanoate(out) + H(+)(out) = 3-methyl-2-oxobutanoate(in) + H(+)(in). It catalyses the reaction 4-methyl-2-oxopentanoate(out) + H(+)(out) = 4-methyl-2-oxopentanoate(in) + H(+)(in). With respect to regulation, inhibited by stilbene disulfonates, such as di-isothiocyanostilbene disulfonate(DIDS), a cross-linking reagent that forms covalent linkages with lysine groups. Functionally, bidirectional proton-coupled monocarboxylate transporter. Catalyzes the rapid transport across the plasma membrane of many monocarboxylates such as lactate, pyruvate, acetate and the ketone bodies acetoacetate and beta-hydroxybutyrate, and thus contributes to the maintenance of intracellular pH. The transport direction is determined by the proton motive force and the concentration gradient of the substrate monocarboxylate. MCT1 is a major lactate exporter. Plays a role in cellular responses to a high-fat diet by modulating the cellular levels of lactate and pyruvate that contribute to the regulation of central metabolic pathways and insulin secretion, with concomitant effects on plasma insulin levels and blood glucose homeostasis. Facilitates the protonated monocarboxylate form of succinate export, that its transient protonation upon muscle cell acidification in exercising muscle and ischemic heart. Functions via alternate outward- and inward-open conformation states. Protonation and deprotonation of 302-Asp is essential for the conformational transition. In Rattus norvegicus (Rat), this protein is Monocarboxylate transporter 1 (Slc16a1).